A 252-amino-acid chain; its full sequence is Triosephosphate isomerase (252 aa).

10–12 (NWK) serves as a coordination point for substrate. His-96 serves as the catalytic Electrophile. Glu-168 serves as the catalytic Proton acceptor. Residues Gly-174, Ser-214, and 235–236 (GG) contribute to the substrate site.

The protein belongs to the triosephosphate isomerase family. Homodimer.

It is found in the cytoplasm. It catalyses the reaction D-glyceraldehyde 3-phosphate = dihydroxyacetone phosphate. It participates in carbohydrate biosynthesis; gluconeogenesis. Its pathway is carbohydrate degradation; glycolysis; D-glyceraldehyde 3-phosphate from glycerone phosphate: step 1/1. In terms of biological role, involved in the gluconeogenesis. Catalyzes stereospecifically the conversion of dihydroxyacetone phosphate (DHAP) to D-glyceraldehyde-3-phosphate (G3P). In Streptococcus equi subsp. zooepidemicus (strain MGCS10565), this protein is Triosephosphate isomerase.